Consider the following 363-residue polypeptide: UDP-N-acetylglucosamine--N-acetylmuramyl-(pentapeptide) pyrophosphoryl-undecaprenol N-acetylglucosamine transferase (363 aa).

Residues T14–G16, R171, S200, and Q290 each bind UDP-N-acetyl-alpha-D-glucosamine.

The protein belongs to the glycosyltransferase 28 family. MurG subfamily.

It localises to the cell inner membrane. It carries out the reaction di-trans,octa-cis-undecaprenyl diphospho-N-acetyl-alpha-D-muramoyl-L-alanyl-D-glutamyl-meso-2,6-diaminopimeloyl-D-alanyl-D-alanine + UDP-N-acetyl-alpha-D-glucosamine = di-trans,octa-cis-undecaprenyl diphospho-[N-acetyl-alpha-D-glucosaminyl-(1-&gt;4)]-N-acetyl-alpha-D-muramoyl-L-alanyl-D-glutamyl-meso-2,6-diaminopimeloyl-D-alanyl-D-alanine + UDP + H(+). Its pathway is cell wall biogenesis; peptidoglycan biosynthesis. Functionally, cell wall formation. Catalyzes the transfer of a GlcNAc subunit on undecaprenyl-pyrophosphoryl-MurNAc-pentapeptide (lipid intermediate I) to form undecaprenyl-pyrophosphoryl-MurNAc-(pentapeptide)GlcNAc (lipid intermediate II). The polypeptide is UDP-N-acetylglucosamine--N-acetylmuramyl-(pentapeptide) pyrophosphoryl-undecaprenol N-acetylglucosamine transferase (Borrelia garinii subsp. bavariensis (strain ATCC BAA-2496 / DSM 23469 / PBi) (Borreliella bavariensis)).